The primary structure comprises 139 residues: MRIMGLDVGDKTIGVAISDLSGTIAQGLTTIKRSSNKKDFERIKQIINEYEVGMIIVGLPKNMNGTLGPQGQKVMRFVEHLKEAFSIPIILWDERLTTVEAQRVLIEKADISRAKRKEVIDKLAAVLILQNYLDSQKNK.

It belongs to the YqgF nuclease family.

The protein localises to the cytoplasm. In terms of biological role, could be a nuclease involved in processing of the 5'-end of pre-16S rRNA. The sequence is that of Putative pre-16S rRNA nuclease from Thermoanaerobacter pseudethanolicus (strain ATCC 33223 / 39E) (Clostridium thermohydrosulfuricum).